We begin with the raw amino-acid sequence, 406 residues long: MSGCPFMGKKHHFNFSELSLEDKNEDSSQEGLNKASKGGLIYGDYLQLDKVLNAQELQSEKKGNKIHDEHLFIVTHQAYELWFKQILWELDSVREIFQNGHVRDERNMLKVVTRIHRISMILKLLVEQFSVLETMTAMDFFDFRDYLSPASGFQSLQFRLLENKIGVPEILRVPYNRRHYRDNFKGETNELLLKSEQELTLLGLVEAWLERTPGLEEEGFHFWGKLEANIFRGLEEELQTVKTKPDSEEKEEQLAELQKQKELFGALFDERRHEHLLSKGERRLSYKALKGALMIYFYREEPRFQVPFQLLTSLMDIDTLMTKWRYNHVCMVHRMIGSKAGTGGSSGYQYLRSTVSDRYKVFVDLFNLSTYLVPRHWVPRLNPSIHKFLYTAECCDSSYFSSDDSD.

Substrate is bound by residues 72–76 (FIVTH) and Arg144. Residue His328 coordinates heme. Thr342 lines the substrate pocket.

It belongs to the tryptophan 2,3-dioxygenase family. As to quaternary structure, homotetramer. Dimer of dimers. Requires heme as cofactor.

It carries out the reaction L-tryptophan + O2 = N-formyl-L-kynurenine. The protein operates within amino-acid degradation; L-tryptophan degradation via kynurenine pathway; L-kynurenine from L-tryptophan: step 1/2. Heme-dependent dioxygenase that catalyzes the oxidative cleavage of the L-tryptophan (L-Trp) pyrrole ring and converts L-tryptophan to N-formyl-L-kynurenine. Catalyzes the oxidative cleavage of the indole moiety. The polypeptide is Tryptophan 2,3-dioxygenase (Xenopus tropicalis (Western clawed frog)).